The chain runs to 338 residues: Formamidase (338 aa).

Residues 15-257 (VVIGLAQLAL…DEIVCCELRP (243 aa)) form the CN hydrolase domain. Glu-61 functions as the Proton acceptor in the catalytic mechanism. Residue Lys-130 is the Proton donor of the active site. Cys-163 (nucleophile) is an active-site residue.

Belongs to the carbon-nitrogen hydrolase superfamily. Aliphatic amidase family.

It catalyses the reaction formamide + H2O = formate + NH4(+). In terms of biological role, is an aliphatic amidase with a restricted substrate specificity, as it only hydrolyzes formamide. In Pseudomonas syringae pv. tomato (strain ATCC BAA-871 / DC3000), this protein is Formamidase.